Consider the following 580-residue polypeptide: MAEFRDDQASRLCDNCKKEIPVFNFTIHEIHCQRNIGVCPVCKEPFPKSDMDIHMAAEHCQVTCKCNKKLEKRQLKQHAETECPLRLAVCQHCDLELSVVKLKEHEDYCGARTELCGSCGRNVLVKELKTHPEVCGRVEEEKRTEAAIPPEAYDEPWSQDRIWIASQLLRQIEALDPPMRLPGRPLQAFEADPFYSRTTSQRSMAAQFPVQNNLFEEQERQERNRSRQSPKDSAENNAHLDFMLALSLQNEGQATSMVEQGFWESVPEADPARAGPTSLGDIKGAADEILLPCEFCEELYPEELLIDHQTSCNPSHALRSLNTGSSSIRGVEDPGTIFQNFLQQATSNQFDTLMGLSSSAAVEDSIIIPCEFCGVQLEEEVLFYHQDQCDQRPATANHRAVEGIPAQDSQPENTSAELSRRRVKHQGDLSSGYMDDVKPESVKGPTYSMSPNRTMNNVASCNRLLNLPSGPRSDCQRSPPGVLKLNNSDSQDIRGQMRGSQNGPIASGHAPVIHSIQNLYPENFAPSFPHGSPGRYGAGGRSEGGRSSRVSPAAAGYHSRAAKAKPPKQQGAGDAEEEEE.

Residue Ala2 is modified to N-acetylalanine. The TRAF-type zinc-finger motif lies at 27–103 (IHEIHCQRNI…DLELSVVKLK (77 aa)). 10 positions are modified to phosphoserine: Ser278, Ser320, Ser326, Ser327, Ser409, Ser415, Ser430, Ser450, Ser469, and Ser532. Disordered regions lie at residues 395 to 453 (TANH…SPNR), 468 to 509 (PSGP…ASGH), and 524 to 580 (FAPS…EEEE). Polar residues predominate over residues 407–417 (QDSQPENTSAE).

Interacts with MAVS, TICAM1, TRAF1, TRAF2, TRAF3 and TRAF6. Expressed in skeletal muscle, brain, liver, kidney, spleen and bone marrow. Expression depends on STAT1.

Negative feedback regulator that controls excessive innate immune responses. Regulates both Toll-like receptor 4 (TLR4) and DDX58/RIG1-like helicases (RLH) pathways. May inhibit the LTR pathway by direct interaction with TRAF6 and attenuation of NF-kappa-B activation. May negatively regulate the RLH pathway downstream from MAVS and upstream of NF-kappa-B and IRF3. The protein is TRAF-type zinc finger domain-containing protein 1 (Trafd1) of Mus musculus (Mouse).